The following is a 304-amino-acid chain: Methionyl-tRNA formyltransferase (304 aa).

A (6S)-5,6,7,8-tetrahydrofolate-binding site is contributed by Ser-110 to Pro-113.

This sequence belongs to the Fmt family.

It carries out the reaction L-methionyl-tRNA(fMet) + (6R)-10-formyltetrahydrofolate = N-formyl-L-methionyl-tRNA(fMet) + (6S)-5,6,7,8-tetrahydrofolate + H(+). In terms of biological role, attaches a formyl group to the free amino group of methionyl-tRNA(fMet). The formyl group appears to play a dual role in the initiator identity of N-formylmethionyl-tRNA by promoting its recognition by IF2 and preventing the misappropriation of this tRNA by the elongation apparatus. The polypeptide is Methionyl-tRNA formyltransferase (Gluconobacter oxydans (strain 621H) (Gluconobacter suboxydans)).